Reading from the N-terminus, the 470-residue chain is V-type ATP synthase beta chain (470 aa).

Belongs to the ATPase alpha/beta chains family.

Its function is as follows. Produces ATP from ADP in the presence of a proton gradient across the membrane. The V-type beta chain is a regulatory subunit. This is V-type ATP synthase beta chain from Deinococcus geothermalis (strain DSM 11300 / CIP 105573 / AG-3a).